The sequence spans 308 residues: tRNA dimethylallyltransferase (308 aa).

8-15 (GPTGTGKS) contributes to the ATP binding site. 10 to 15 (TGTGKS) contacts substrate.

This sequence belongs to the IPP transferase family. In terms of assembly, monomer. Requires Mg(2+) as cofactor.

The enzyme catalyses adenosine(37) in tRNA + dimethylallyl diphosphate = N(6)-dimethylallyladenosine(37) in tRNA + diphosphate. In terms of biological role, catalyzes the transfer of a dimethylallyl group onto the adenine at position 37 in tRNAs that read codons beginning with uridine, leading to the formation of N6-(dimethylallyl)adenosine (i(6)A). In Mycolicibacterium vanbaalenii (strain DSM 7251 / JCM 13017 / BCRC 16820 / KCTC 9966 / NRRL B-24157 / PYR-1) (Mycobacterium vanbaalenii), this protein is tRNA dimethylallyltransferase.